The primary structure comprises 306 residues: Embryogenic cell protein 40 (306 aa).

Disordered stretches follow at residues 1–57 (MADL…ASHG), 80–171 (AATH…GGLG), and 188–306 (GTGI…PTSH). Over residues 12–23 (IQLTDQHGNPVQ) the composition is skewed to polar residues. The segment covering 32–44 (VHITGVATTGATT) has biased composition (low complexity). 3 stretches are compositionally biased toward gly residues: residues 85 to 119 (GSHG…GTGT), 127 to 151 (GPTG…GTGV), and 159 to 171 (GPTG…GGLG). Residues 194–204 (GSAPASAGSHS) show a composition bias toward low complexity. Basic and acidic residues-rich tracts occupy residues 205–218 (HAPE…EQLH) and 243–259 (KIKE…DEHT). Residues 260 to 278 (TVATTKTTTAAHPGGAAVA) show a composition bias toward low complexity. Positions 279–298 (VEHHEHEKKSMLDKIKDKLP) are enriched in basic and acidic residues.

Belongs to the plant dehydrin family.

This Daucus carota (Wild carrot) protein is Embryogenic cell protein 40 (ECP40).